We begin with the raw amino-acid sequence, 175 residues long: Cytochrome c homolog (175 aa).

Over 1–8 the chain is Cytoplasmic; the sequence is MTGKELNK. Residues 9-29 form a helical; Signal-anchor membrane-spanning segment; that stretch reads IVAAILFASLIAMIVGFIANI. Over 30–175 the chain is Periplasmic; that stretch reads LYKPNLHVLH…LFLKNYVHDQ (146 aa). Heme c contacts are provided by C84, C87, H88, and M150.

This sequence belongs to the cytochrome c family. Binds 1 heme c group covalently per subunit.

It localises to the cell membrane. In terms of biological role, may be involved in electron transfer from bc1 complex to aa3. The polypeptide is Cytochrome c homolog (cycM) (Rickettsia prowazekii (strain Madrid E)).